The chain runs to 228 residues: Phosphatidate cytidylyltransferase (228 aa).

The next 6 helical transmembrane spans lie at 31–51, 65–85, 93–113, 131–151, 165–185, and 206–226; these read FVVAILWFKTLFYILMILVGL, IHYLLIGFIIIPIPISLLIFL, LVIMLYFCIIWSVDTFAMIGG, WTGLIIGTISAGLIAVLVSLI, IYLFIISCILALIAQSSDLFI, and GVLDRFDSIILTAPVFFGINI.

Belongs to the CDS family.

It localises to the cell membrane. It carries out the reaction a 1,2-diacyl-sn-glycero-3-phosphate + CTP + H(+) = a CDP-1,2-diacyl-sn-glycerol + diphosphate. Its pathway is phospholipid metabolism; CDP-diacylglycerol biosynthesis; CDP-diacylglycerol from sn-glycerol 3-phosphate: step 3/3. In Rickettsia typhi (strain ATCC VR-144 / Wilmington), this protein is Phosphatidate cytidylyltransferase (cdsA).